The chain runs to 280 residues: Golgi to ER traffic protein 2 (280 aa).

Residues 1–149 (MPSDREKQRI…IAYNLYQQRK (149 aa)) lie on the Cytoplasmic side of the membrane. Positions 15 to 59 (RQAKMAKGGASDRLNKILSQGSSVKTSAVSVLDQPQPADHDPEGM) are disordered. Residues 31–43 (ILSQGSSVKTSAV) show a composition bias toward polar residues. A helical membrane pass occupies residues 150–170 (VRHRFLVVRMVSILANFVYHF). Residues 171-197 (LTISDFSFSPSANPFIRSIPPTSSVSS) are Lumenal-facing. The helical transmembrane segment at 198 to 217 (FFQIFVAIEAVLVAAYIAAS) threads the bilayer. Over 218-257 (RNVPSNNNGLLVKGISMAAMFVPKLQRFQPLIMKIIGCWD) the chain is Cytoplasmic. A helical transmembrane segment spans residues 258-278 (TVTFVLNDLGLVVLLFGLISF). The Lumenal portion of the chain corresponds to 279 to 280 (RR).

The protein belongs to the GET2 family. As to quaternary structure, component of the Golgi to ER traffic (GET) complex, which is composed of GET1, GET2 and GET3. Within the complex, GET1 and GET2 form a heterotetramer which is stabilized by phosphatidylinositol binding and which binds to the GET3 homodimer.

The protein localises to the endoplasmic reticulum membrane. Its subcellular location is the golgi apparatus membrane. Its function is as follows. Required for the post-translational delivery of tail-anchored (TA) proteins to the endoplasmic reticulum. Together with GET1, acts as a membrane receptor for soluble GET3, which recognizes and selectively binds the transmembrane domain of TA proteins in the cytosol. The GET complex cooperates with the HDEL receptor ERD2 to mediate the ATP-dependent retrieval of resident ER proteins that contain a C-terminal H-D-E-L retention signal from the Golgi to the ER. In Meyerozyma guilliermondii (strain ATCC 6260 / CBS 566 / DSM 6381 / JCM 1539 / NBRC 10279 / NRRL Y-324) (Yeast), this protein is Golgi to ER traffic protein 2.